The sequence spans 37 residues: Small ribosomal subunit protein uS19 (37 aa).

It belongs to the universal ribosomal protein uS19 family.

The sequence is that of Small ribosomal subunit protein uS19 (RPS15) from Helix lucorum (Snail).